Here is a 136-residue protein sequence, read N- to C-terminus: Large ribosomal subunit protein uL16 (136 aa).

The protein belongs to the universal ribosomal protein uL16 family. As to quaternary structure, part of the 50S ribosomal subunit.

In terms of biological role, binds 23S rRNA and is also seen to make contacts with the A and possibly P site tRNAs. In Rickettsia africae (strain ESF-5), this protein is Large ribosomal subunit protein uL16.